Consider the following 521-residue polypeptide: Acidic amino acid decarboxylase GADL1 (521 aa).

N6-(pyridoxal phosphate)lysine is present on K333.

This sequence belongs to the group II decarboxylase family. As to quaternary structure, homodimer. Pyridoxal 5'-phosphate is required as a cofactor. As to expression, expressed very weakly in neurons and not detected in astrocytes, brain or liver.

The enzyme catalyses L-aspartate + H(+) = beta-alanine + CO2. It carries out the reaction 3-sulfino-L-alanine + H(+) = hypotaurine + CO2. The catalysed reaction is L-cysteate + H(+) = taurine + CO2. In terms of biological role, may catalyze the decarboxylation of L-aspartate, 3-sulfino-L-alanine (cysteine sulfinic acid), and L-cysteate to beta-alanine, hypotaurine and taurine, respectively. Does not exhibit any decarboxylation activity toward glutamate. This is Acidic amino acid decarboxylase GADL1 (GADL1) from Homo sapiens (Human).